The sequence spans 343 residues: Thromboxane A2 receptor (343 aa).

The Extracellular portion of the chain corresponds to 1–29 (MWPNGSSLGPCFRPTNITLEERRLIASPW). Residues N4 and N16 are each glycosylated (N-linked (GlcNAc...) asparagine). A helical membrane pass occupies residues 30 to 52 (FAASFCVVGLASNLLALSVLAGA). Residues 53–66 (RQGGSHTRSSFLTF) are Cytoplasmic-facing. The chain crosses the membrane as a helical span at residues 67 to 87 (LCGLVLTDFLGLLVTGAIVVS). At 88–106 (QHAALFEWHAVDPGCRLCR) the chain is on the extracellular side. The cysteines at positions 105 and 183 are disulfide-linked. Residues 107–128 (FMGVVMIFFGLSPLLLGATMAS) form a helical membrane-spanning segment. The Cytoplasmic portion of the chain corresponds to 129–149 (ERFLGITRPFSRPVVTSQRRA). The helical transmembrane segment at 150–172 (WATVGLVWAAALALGLLPLLGLG) threads the bilayer. The Extracellular segment spans residues 173 to 193 (RYTVQYPGSWCFLTLGAESGD). A helical membrane pass occupies residues 194 to 219 (VAFGLLFSMLGGLSVGLSFLLNTVSV). The Cytoplasmic segment spans residues 220-246 (ATLCHVYHGQEAAQQRPRDSEVEMMAQ). Residues 247–270 (LLGIMLVASVCWLPLLVFIAQTVL) traverse the membrane as a helical segment. The Extracellular portion of the chain corresponds to 271–289 (RNPPAMSPSGQLSRATEQE). A helical transmembrane segment spans residues 290 to 311 (LLIYLRVATWNQILDPWVYILF). Residues 312-343 (RRAVLRRLQPRLSTRPRSLSLQPQLTQRSGLQ) lie on the Cytoplasmic side of the membrane. Phosphoserine occurs at positions 329 and 331.

It belongs to the G-protein coupled receptor 1 family. Interacts with RPGRIP1L. Interacts with RACK1; the interaction regulates TBXA2R cell surface expression.

The protein resides in the cell membrane. Receptor for thromboxane A2 (TXA2), a potent stimulator of platelet aggregation. The activity of this receptor is mediated by a G-protein that activates a phosphatidylinositol-calcium second messenger system. In the kidney, the binding of TXA2 to glomerular TP receptors causes intense vasoconstriction. Activates phospholipase C and adenylyl cyclase. In Chlorocebus aethiops (Green monkey), this protein is Thromboxane A2 receptor (TBXA2R).